We begin with the raw amino-acid sequence, 283 residues long: Phosphatidylserine decarboxylase proenzyme (283 aa).

Catalysis depends on charge relay system; for autoendoproteolytic cleavage activity residues Asp96, His152, and Ser250. Residue Ser250 is the Schiff-base intermediate with substrate; via pyruvic acid; for decarboxylase activity of the active site. Pyruvic acid (Ser); by autocatalysis is present on Ser250.

This sequence belongs to the phosphatidylserine decarboxylase family. PSD-B subfamily. Prokaryotic type I sub-subfamily. Heterodimer of a large membrane-associated beta subunit and a small pyruvoyl-containing alpha subunit. Pyruvate is required as a cofactor. Post-translationally, is synthesized initially as an inactive proenzyme. Formation of the active enzyme involves a self-maturation process in which the active site pyruvoyl group is generated from an internal serine residue via an autocatalytic post-translational modification. Two non-identical subunits are generated from the proenzyme in this reaction, and the pyruvate is formed at the N-terminus of the alpha chain, which is derived from the carboxyl end of the proenzyme. The autoendoproteolytic cleavage occurs by a canonical serine protease mechanism, in which the side chain hydroxyl group of the serine supplies its oxygen atom to form the C-terminus of the beta chain, while the remainder of the serine residue undergoes an oxidative deamination to produce ammonia and the pyruvoyl prosthetic group on the alpha chain. During this reaction, the Ser that is part of the protease active site of the proenzyme becomes the pyruvoyl prosthetic group, which constitutes an essential element of the active site of the mature decarboxylase.

The protein resides in the cell membrane. The enzyme catalyses a 1,2-diacyl-sn-glycero-3-phospho-L-serine + H(+) = a 1,2-diacyl-sn-glycero-3-phosphoethanolamine + CO2. It functions in the pathway phospholipid metabolism; phosphatidylethanolamine biosynthesis; phosphatidylethanolamine from CDP-diacylglycerol: step 2/2. Its function is as follows. Catalyzes the formation of phosphatidylethanolamine (PtdEtn) from phosphatidylserine (PtdSer). This Acinetobacter baumannii (strain ATCC 17978 / DSM 105126 / CIP 53.77 / LMG 1025 / NCDC KC755 / 5377) protein is Phosphatidylserine decarboxylase proenzyme.